Here is a 275-residue protein sequence, read N- to C-terminus: 2'-N-acetylparomamine deacetylase (275 aa).

3 residues coordinate Zn(2+): His-14, Asp-17, and His-166.

Belongs to the PIGL family. The cofactor is Zn(2+).

The catalysed reaction is 2'-N-acetylparomamine + H2O = paromamine + acetate. Its pathway is antibiotic biosynthesis; butirosin biosynthesis. Functionally, deacetylase involved in the biosynthesis of butirosin by mediating deacetylation of 2'-N-acetylparomamine. This chain is 2'-N-acetylparomamine deacetylase (btrD), found in Niallia circulans (Bacillus circulans).